Consider the following 348-residue polypeptide: N-acetyl-gamma-glutamyl-phosphate reductase (348 aa).

Residue C150 is part of the active site.

The protein belongs to the NAGSA dehydrogenase family. Type 1 subfamily.

The protein resides in the cytoplasm. The catalysed reaction is N-acetyl-L-glutamate 5-semialdehyde + phosphate + NADP(+) = N-acetyl-L-glutamyl 5-phosphate + NADPH + H(+). The protein operates within amino-acid biosynthesis; L-arginine biosynthesis; N(2)-acetyl-L-ornithine from L-glutamate: step 3/4. Its function is as follows. Catalyzes the NADPH-dependent reduction of N-acetyl-5-glutamyl phosphate to yield N-acetyl-L-glutamate 5-semialdehyde. In Symbiobacterium thermophilum (strain DSM 24528 / JCM 14929 / IAM 14863 / T), this protein is N-acetyl-gamma-glutamyl-phosphate reductase.